Here is a 211-residue protein sequence, read N- to C-terminus: Probable nicotinate-nucleotide adenylyltransferase (211 aa).

The protein belongs to the NadD family.

The catalysed reaction is nicotinate beta-D-ribonucleotide + ATP + H(+) = deamido-NAD(+) + diphosphate. It functions in the pathway cofactor biosynthesis; NAD(+) biosynthesis; deamido-NAD(+) from nicotinate D-ribonucleotide: step 1/1. In terms of biological role, catalyzes the reversible adenylation of nicotinate mononucleotide (NaMN) to nicotinic acid adenine dinucleotide (NaAD). This is Probable nicotinate-nucleotide adenylyltransferase from Legionella pneumophila (strain Lens).